Consider the following 358-residue polypeptide: Photosystem II protein D1 3 (358 aa).

Transmembrane regions (helical) follow at residues 28–45 (YIGW…AATT), 117–132 (HFLI…QWEL), and 141–155 (WICV…AAMA). H117 serves as a coordination point for chlorophyll a. Residue Y125 coordinates pheophytin a. D169 and E188 together coordinate [CaMn4O5] cluster. Residues 196 to 217 (FHMLGVAGVFGGSLFSAMHGSL) traverse the membrane as a helical segment. H197 contributes to the chlorophyll a binding site. Residues H214 and 263-264 (SF) each bind a quinone. H214 contacts Fe cation. Fe cation is bound at residue H271. A helical transmembrane segment spans residues 273–287 (LLGAWPVVGIWFTSM). Positions 331, 332, 341, and 343 each coordinate [CaMn4O5] cluster. A propeptide spanning residues 344-358 (TVESTPVALQAPAIG) is cleaved from the precursor.

It belongs to the reaction center PufL/M/PsbA/D family. As to quaternary structure, PSII is composed of 1 copy each of membrane proteins PsbA, PsbB, PsbC, PsbD, PsbE, PsbF, PsbH, PsbI, PsbJ, PsbK, PsbL, PsbM, PsbT, PsbX, PsbY, PsbZ, Psb30/Ycf12, peripheral proteins PsbO, CyanoQ (PsbQ), PsbU, PsbV and a large number of cofactors. It forms dimeric complexes. The D1/D2 heterodimer binds P680, chlorophylls that are the primary electron donor of PSII, and subsequent electron acceptors. It shares a non-heme iron and each subunit binds pheophytin, quinone, additional chlorophylls, carotenoids and lipids. D1 provides most of the ligands for the Mn4-Ca-O5 cluster of the oxygen-evolving complex (OEC). There is also a Cl(-1) ion associated with D1 and D2, which is required for oxygen evolution. The PSII complex binds additional chlorophylls, carotenoids and specific lipids. serves as cofactor. Post-translationally, tyr-160 forms a radical intermediate that is referred to as redox-active TyrZ, YZ or Y-Z. C-terminally processed by CtpA; processing is essential to allow assembly of the oxygen-evolving complex and thus photosynthetic growth.

The protein resides in the cellular thylakoid membrane. The enzyme catalyses 2 a plastoquinone + 4 hnu + 2 H2O = 2 a plastoquinol + O2. Its function is as follows. Photosystem II (PSII) is a light-driven water:plastoquinone oxidoreductase that uses light energy to abstract electrons from H(2)O, generating O(2) and a proton gradient subsequently used for ATP formation. It consists of a core antenna complex that captures photons, and an electron transfer chain that converts photonic excitation into a charge separation. The D1/D2 (PsbA/PsbD) reaction center heterodimer binds P680, the primary electron donor of PSII as well as several subsequent electron acceptors. The chain is Photosystem II protein D1 3 from Synechococcus sp. (strain CC9311).